Here is a 283-residue protein sequence, read N- to C-terminus: Demethylrebeccamycin-D-glucose O-methyltransferase (283 aa).

S-adenosyl-L-methionine is bound by residues Ser-101, Gln-106, 129 to 130 (DA), Leu-146, and His-151.

This sequence belongs to the methyltransferase superfamily. As to quaternary structure, monomer.

It catalyses the reaction 4'-demethylrebeccamycin + S-adenosyl-L-methionine = rebeccamycin + S-adenosyl-L-homocysteine + H(+). In terms of biological role, glycosyl O-methyltransferase that catalyzes the final step in the biosynthesis of rebeccamycin, an indolocarbazole alkaloid that inhibits topoisomerase 1. Has broad substrate specificity and functions as glycosyl O-methyltransferase on a number of rebeccamycin analogs. The polypeptide is Demethylrebeccamycin-D-glucose O-methyltransferase (rebM) (Lentzea aerocolonigenes (Lechevalieria aerocolonigenes)).